A 642-amino-acid chain; its full sequence is Kinesin-2b (642 aa).

The Kinesin motor domain occupies 12-344 (NVMVMVRVRP…LRYADRAKQI (333 aa)). Residue 107-114 (GQTGSGKT) coordinates ATP. Gly110, Gly112, Lys113, and Thr114 together coordinate ADP. Thr114 contributes to the Mg(2+) binding site. Positions 415–475 (VQSLRKNLDK…ERKAKERQLM (61 aa)) form a coiled coil.

The protein belongs to the TRAFAC class myosin-kinesin ATPase superfamily. Kinesin family. Kinesin II subfamily.

Its subcellular location is the cell projection. The protein localises to the cilium. It is found in the flagellum. It localises to the cytoplasm. The protein resides in the cytoskeleton. Its subcellular location is the flagellum axoneme. The protein localises to the flagellum basal body. Its function is as follows. Involved in anterograde intraflagellar transport (IFT). Involved in flagellar assembly. The chain is Kinesin-2b from Giardia intestinalis (strain ATCC 50803 / WB clone C6) (Giardia lamblia).